A 1044-amino-acid polypeptide reads, in one-letter code: AT-rich interactive domain-containing protein 5B (1044 aa).

Disordered regions lie at residues 143-211, 301-350, 363-392, 554-591, 603-672, 733-767, 811-835, and 884-912; these read PRKK…GDEC, RFTK…GDKD, MEEL…LTED, NNYP…SSVE, QHAQ…SFLS, SQKE…LSTS, VSAS…RGEE, and TPLH…KPAE. 3 stretches are compositionally biased toward basic and acidic residues: residues 197–211, 301–310, and 337–350; these read VQSE…GDEC, RFTKGEEDKP, and RPKD…GDKD. The 93-residue stretch at 212–304 folds into the ARID domain; that stretch reads RTDEQAFLVA…LILPYERFTK (93 aa). Positions 369 to 380 are enriched in polar residues; it reads KQNSQQLQAPTQ. Low complexity predominate over residues 565–591; that stretch reads VSRRLSSSGTEVSSAGQSSSQVSSSVE. 3 stretches are compositionally biased toward basic and acidic residues: residues 611-635, 644-660, and 733-746; these read RGSE…EPVH, PYLK…KSAE, and SQKE…RVTE. Positions 752–767 are enriched in low complexity; that stretch reads LSLPKSSPLKLPLSTS. Composition is skewed to basic and acidic residues over residues 816–826 and 894–909; these read KVTESHSKVLE and LPGK…ESVK.

It belongs to the ARID5B family.

It is found in the nucleus. Functionally, transcription coactivator that binds to the 5'-AATA[CT]-3' core sequence and plays a key role in adipogenesis and liver development. Required for adipogenesis: regulates triglyceride metabolism in adipocytes by regulating expression of adipogenic genes. In Danio rerio (Zebrafish), this protein is AT-rich interactive domain-containing protein 5B (arid5b).